Consider the following 558-residue polypeptide: Potassium-transporting ATPase potassium-binding subunit (558 aa).

The next 11 helical transmembrane spans lie at 1-21 (MDTL…VLVH), 58-78 (WPAY…VVYG), 85-105 (FLPY…NTAV), 130-150 (GLAV…IALV), 179-199 (LSLV…FAGF), 245-265 (PTAW…FSLP), 279-299 (TAIA…LTLF), 374-394 (GLYG…LLVG), 416-436 (ILVT…IPAV), 484-504 (ALGV…LALA), and 527-547 (FVGL…FPVL).

It belongs to the KdpA family. As to quaternary structure, the system is composed of three essential subunits: KdpA, KdpB and KdpC.

It is found in the cell membrane. Functionally, part of the high-affinity ATP-driven potassium transport (or Kdp) system, which catalyzes the hydrolysis of ATP coupled with the electrogenic transport of potassium into the cytoplasm. This subunit binds the extracellular potassium ions and delivers the ions to the membrane domain of KdpB through an intramembrane tunnel. In Clavibacter sepedonicus (Clavibacter michiganensis subsp. sepedonicus), this protein is Potassium-transporting ATPase potassium-binding subunit.